Reading from the N-terminus, the 245-residue chain is tRNA pseudouridine synthase A (245 aa).

Aspartate 52 serves as the catalytic Nucleophile. Tyrosine 111 contacts substrate.

The protein belongs to the tRNA pseudouridine synthase TruA family. In terms of assembly, homodimer.

The catalysed reaction is uridine(38/39/40) in tRNA = pseudouridine(38/39/40) in tRNA. Formation of pseudouridine at positions 38, 39 and 40 in the anticodon stem and loop of transfer RNAs. The chain is tRNA pseudouridine synthase A from Rhodopseudomonas palustris (strain HaA2).